A 487-amino-acid polypeptide reads, in one-letter code: MKDILKLSIAEMHDKLKKREFSAVELTKLHIEAVDNEKLNAFVTKTPEIALSAAEKADHIFTHQQENLTPLTGIPVGIKDLFCTKNVRTTACSNILKNFIPQYDSTVTKLLLNNGAVMLGKLNMDEFAMGSSNSNSCFGNVKNPWIRADGAEVVPGGSSGGSSAAVAGFLCAGALGSDTGGSVRQPAAFCGIVGLKPTYGRCSRLGMIAFASSLDQAGVLTRTVEDSALMLQSICGYDTQDPTSVNINVPKFSESITHKIKGTRIGIPKEYELSEKHKEYAEISEMWSKGIQYLKDEGAEIIEISLPHTSYALPVYYIICSAEASSNLARYDGIRYGTRISSDDINEMYKLTRGYNFGTEVKRRILIGAYALSSGYYDAYYNKAQCIRRLVTNDFIESFKKIDYILTPTAPKEAFSINEQLDTLTMYLNDVFTVPASLAGLPAISVPIGLSKNNLPLSLQIIGNYYDEGGILNLASIIEKHTGRILK.

Catalysis depends on charge relay system residues K79 and S158. S182 serves as the catalytic Acyl-ester intermediate.

It belongs to the amidase family. GatA subfamily. As to quaternary structure, heterotrimer of A, B and C subunits.

It carries out the reaction L-glutamyl-tRNA(Gln) + L-glutamine + ATP + H2O = L-glutaminyl-tRNA(Gln) + L-glutamate + ADP + phosphate + H(+). Allows the formation of correctly charged Gln-tRNA(Gln) through the transamidation of misacylated Glu-tRNA(Gln) in organisms which lack glutaminyl-tRNA synthetase. The reaction takes place in the presence of glutamine and ATP through an activated gamma-phospho-Glu-tRNA(Gln). This is Glutamyl-tRNA(Gln) amidotransferase subunit A from Ehrlichia canis (strain Jake).